A 329-amino-acid chain; its full sequence is Ferredoxin--NADP reductase 2 (329 aa).

8 residues coordinate FAD: threonine 18, glutamate 37, glutamine 45, tyrosine 50, valine 90, phenylalanine 124, aspartate 285, and serine 326.

The protein belongs to the ferredoxin--NADP reductase type 2 family. Homodimer. It depends on FAD as a cofactor.

It catalyses the reaction 2 reduced [2Fe-2S]-[ferredoxin] + NADP(+) + H(+) = 2 oxidized [2Fe-2S]-[ferredoxin] + NADPH. The protein is Ferredoxin--NADP reductase 2 of Bacillus cytotoxicus (strain DSM 22905 / CIP 110041 / 391-98 / NVH 391-98).